The primary structure comprises 225 residues: tRNA (guanine-N(7)-)-methyltransferase (225 aa).

The S-adenosyl-L-methionine site is built by Glu-56, Glu-81, Asp-108, and Asp-131. Asp-131 is an active-site residue. Substrate-binding positions include Lys-135, Asp-167, and 204 to 207 (TKFE).

This sequence belongs to the class I-like SAM-binding methyltransferase superfamily. TrmB family.

The catalysed reaction is guanosine(46) in tRNA + S-adenosyl-L-methionine = N(7)-methylguanosine(46) in tRNA + S-adenosyl-L-homocysteine. It participates in tRNA modification; N(7)-methylguanine-tRNA biosynthesis. In terms of biological role, catalyzes the formation of N(7)-methylguanine at position 46 (m7G46) in tRNA. The protein is tRNA (guanine-N(7)-)-methyltransferase of Legionella pneumophila (strain Corby).